The sequence spans 152 residues: Transcriptional regulator MraZ (152 aa).

SpoVT-AbrB domains follow at residues 5 to 52 and 81 to 124; these read ANAV…PLPE and AVDL…NEDA.

It belongs to the MraZ family. As to quaternary structure, forms oligomers.

The protein resides in the cytoplasm. It is found in the nucleoid. In Azotobacter vinelandii (strain DJ / ATCC BAA-1303), this protein is Transcriptional regulator MraZ.